Consider the following 464-residue polypeptide: Galactose-proton symporter (464 aa).

Topologically, residues 1–15 (MPDAKKQGRSNKAMT) are cytoplasmic. The chain crosses the membrane as a helical span at residues 16 to 36 (FFVCFLAALAGLLFGLDIGVI). The Periplasmic portion of the chain corresponds to 37 to 56 (AGALPFIADEFQITSHTQEW). The helical transmembrane segment at 57 to 77 (VVSSMMFGAAVGAVGSGWLSF) threads the bilayer. Over 78–84 (KLGRKKS) the chain is Cytoplasmic. A helical membrane pass occupies residues 85–105 (LMIGAILFVAGSLFSAAAPNV). Topologically, residues 106-112 (EVLILSR) are periplasmic. The helical transmembrane segment at 113–133 (VLLGLAVGVASYTAPLYLSEI) threads the bilayer. Residues 134-139 (APEKIR) lie on the Cytoplasmic side of the membrane. Residues 140–160 (GSMISMYQLMITIGILGAYLS) form a helical membrane-spanning segment. At 161–171 (DTAFSYTGAWR) the chain is on the periplasmic side. A helical membrane pass occupies residues 172–192 (WMLGVIIIPAILLLIGVFFLP). Over 193–250 (DSPRWFAAKRRFVDAERVLLRLRDTSAEAKRELDEIRESLQVKQSGWALFKENSNFRR) the chain is Cytoplasmic. A helical membrane pass occupies residues 251 to 271 (AVFLGVLLQVMQQFTGMNVIM). The Periplasmic segment spans residues 272-290 (YYAPKIFELAGYTNTTEQM). The helical transmembrane segment at 291–311 (WGTVIVGLTNVLATFIAIGLV) threads the bilayer. At 312-321 (DRWGRKPTLT) the chain is on the cytoplasmic side. A helical transmembrane segment spans residues 322 to 342 (LGFLVMAAGMGVLGTMMHIGI). Topologically, residues 343 to 351 (HSPSAQYFA) are periplasmic. The helical transmembrane segment at 352–372 (IAMLLMFIVGFAMSAGPLIWV) threads the bilayer. Over 373–394 (LCSEIQPLKGRDFGITCSTATN) the chain is Cytoplasmic. Residues 395-415 (WIANMIVGATFLTMLNTLGNA) form a helical membrane-spanning segment. Residue N416 is a topological domain, periplasmic. Residues 417–437 (TFWVYAALNVLFILLTLWLVP) traverse the membrane as a helical segment. The Cytoplasmic portion of the chain corresponds to 438-464 (ETKHVSLEHIERNLMKGRKLREIGAHD).

It belongs to the major facilitator superfamily. Sugar transporter (TC 2.A.1.1) family.

The protein resides in the cell inner membrane. Uptake of galactose across the boundary membrane with the concomitant transport of protons into the cell (symport system). The chain is Galactose-proton symporter (galP) from Escherichia coli O6:H1 (strain CFT073 / ATCC 700928 / UPEC).